Consider the following 119-residue polypeptide: UPF0738 protein BAA_1286 (119 aa).

It belongs to the UPF0738 family.

In Bacillus anthracis (strain A0248), this protein is UPF0738 protein BAA_1286.